Here is a 636-residue protein sequence, read N- to C-terminus: Sodium-dependent multivitamin transporter (636 aa).

12 consecutive transmembrane segments (helical) span residues 24 to 44 (FSLVDYVVFSLLLVFSLAIGL), 68 to 88 (CLPVALSLLATFQSAVAILGV), 101 to 121 (FLGCCYFLGLLIPAHVFIPVF), 143 to 163 (ICGTVTFIFQMVIYMGVVLYA), 176 to 196 (LWLSVLTLGIVCTIYTALGGL), 199 to 219 (VIWTDVFQTLVMFLGQLAVII), 256 to 276 (FWTLAFGGVFMMLSLYGVNQA), 297 to 317 (VFPCQQVALSMGCLIGLVMFA), 336 to 356 (FVLYFVMDLLKGLPGLPGLFV), 404 to 424 (FGYGLLCLGMAYISSQMGPVL), 428 to 448 (ISIFGMVGGPLLGLFCLGMFF), and 456 to 476 (AIVGLLAGLIMAFWIGIGSIV). 2 N-linked (GlcNAc...) asparagine glycosylation sites follow: N489 and N498. The helical transmembrane segment at 528–548 (LWYSAHNSTTVIVVGLIVSLL) threads the bilayer. Residues 606–627 (LRASGDKEPMTEASPVHQGTSP) form a disordered region.

The protein belongs to the sodium:solute symporter (SSF) (TC 2.A.21) family. Interacts with PDZD11.

The protein resides in the cell membrane. The protein localises to the apical cell membrane. It carries out the reaction biotin(out) + 2 Na(+)(out) = biotin(in) + 2 Na(+)(in). The catalysed reaction is (R)-pantothenate(out) + 2 Na(+)(out) = (R)-pantothenate(in) + 2 Na(+)(in). The enzyme catalyses (R)-lipoate(out) + 2 Na(+)(out) = (R)-lipoate(in) + 2 Na(+)(in). It catalyses the reaction iodide(out) + 2 Na(+)(out) = iodide(in) + 2 Na(+)(in). In terms of biological role, sodium-dependent multivitamin transporter that mediates the electrogenic transport of pantothenate, biotin, lipoate and iodide. Functions as a Na(+)-coupled substrate symporter where the stoichiometry of Na(+):substrate is 2:1, creating an electrochemical Na(+) gradient used as driving force for substrate uptake. Required for biotin and pantothenate uptake in the intestine across the brush border membrane. Plays a role in the maintenance of intestinal mucosa integrity, by providing the gut mucosa with biotin. Contributes to the luminal uptake of biotin and pantothenate into the brain across the blood-brain barrier. This is Sodium-dependent multivitamin transporter (SLC5A6) from Oryctolagus cuniculus (Rabbit).